Here is a 361-residue protein sequence, read N- to C-terminus: 5-formaminoimidazole-4-carboxamide-1-(beta)-D-ribofuranosyl 5'-monophosphate synthetase (361 aa).

Positions 27 and 94 each coordinate 5-amino-1-(5-phospho-beta-D-ribosyl)imidazole-4-carboxamide. Residues 116 to 348 (RAILRWEAER…MGQRIAKEIK (233 aa)) form the ATP-grasp domain. ATP contacts are provided by residues 146–208 (PDEI…ANYC) and glutamate 230. Asparagine 258 contributes to the 5-amino-1-(5-phospho-beta-D-ribosyl)imidazole-4-carboxamide binding site. Residues glutamine 297 and glutamate 310 each contribute to the Mg(2+) site.

Belongs to the phosphohexose mutase family. It depends on Mg(2+) as a cofactor. The cofactor is Mn(2+).

The enzyme catalyses 5-amino-1-(5-phospho-beta-D-ribosyl)imidazole-4-carboxamide + formate + ATP = 5-formamido-1-(5-phospho-D-ribosyl)imidazole-4-carboxamide + ADP + phosphate. The protein operates within purine metabolism; IMP biosynthesis via de novo pathway; 5-formamido-1-(5-phospho-D-ribosyl)imidazole-4-carboxamide from 5-amino-1-(5-phospho-D-ribosyl)imidazole-4-carboxamide (formate route): step 1/1. In terms of biological role, catalyzes the ATP- and formate-dependent formylation of 5-aminoimidazole-4-carboxamide-1-beta-d-ribofuranosyl 5'-monophosphate (AICAR) to 5-formaminoimidazole-4-carboxamide-1-beta-d-ribofuranosyl 5'-monophosphate (FAICAR) in the absence of folates. In Methanococcus maripaludis (strain DSM 14266 / JCM 13030 / NBRC 101832 / S2 / LL), this protein is 5-formaminoimidazole-4-carboxamide-1-(beta)-D-ribofuranosyl 5'-monophosphate synthetase.